The following is a 306-amino-acid chain: Glutamyl-Q tRNA(Asp) synthetase (306 aa).

L-glutamate is bound by residues 29 to 33 and D65; that span reads RFAPS. The 'HIGH' region signature appears at 32 to 42; it reads PSPTGPLHLGN. Positions 121, 123, 141, and 145 each coordinate Zn(2+). Residues Y188 and R206 each coordinate L-glutamate. The short motif at 244–248 is the 'KMSKS' region element; that stretch reads KLAKR. Position 247 (K247) interacts with ATP.

The protein belongs to the class-I aminoacyl-tRNA synthetase family. GluQ subfamily. The cofactor is Zn(2+).

Functionally, catalyzes the tRNA-independent activation of glutamate in presence of ATP and the subsequent transfer of glutamate onto a tRNA(Asp). Glutamate is transferred on the 2-amino-5-(4,5-dihydroxy-2-cyclopenten-1-yl) moiety of the queuosine in the wobble position of the QUC anticodon. The protein is Glutamyl-Q tRNA(Asp) synthetase of Prochlorococcus marinus (strain MIT 9303).